A 451-amino-acid chain; its full sequence is uncharacterized protein (451 aa).

The HD domain occupies 50-147 (RFEHSLGTMF…DVDADRMDYL (98 aa)).

This is an uncharacterized protein from Methanocaldococcus jannaschii (strain ATCC 43067 / DSM 2661 / JAL-1 / JCM 10045 / NBRC 100440) (Methanococcus jannaschii).